We begin with the raw amino-acid sequence, 311 residues long: NAD kinase (311 aa).

The Proton acceptor role is filled by aspartate 67. NAD(+) is bound by residues 67-68 (DG), arginine 72, 140-141 (ND), arginine 151, aspartate 170, 181-186 (TAYSLS), and glutamine 240. Residues 278–287 (LKEGGSRQDD) show a composition bias toward basic and acidic residues. The tract at residues 278-311 (LKEGGSRQDDENPAATVNPETDSKYPHSHPGSTG) is disordered.

It belongs to the NAD kinase family. It depends on a divalent metal cation as a cofactor.

Its subcellular location is the cytoplasm. The catalysed reaction is NAD(+) + ATP = ADP + NADP(+) + H(+). In terms of biological role, involved in the regulation of the intracellular balance of NAD and NADP, and is a key enzyme in the biosynthesis of NADP. Catalyzes specifically the phosphorylation on 2'-hydroxyl of the adenosine moiety of NAD to yield NADP. This is NAD kinase from Moorella thermoacetica (strain ATCC 39073 / JCM 9320).